We begin with the raw amino-acid sequence, 732 residues long: Elongation factor 2 (732 aa).

A tr-type G domain is found at 19–260; that stretch reads ERIRNMGIAA…MVVRHLPNPL (242 aa). GTP-binding positions include 28–35, 94–98, and 148–151; these read AHIDHGKT, DTPGH, and NKVD. His-597 bears the Diphthamide mark.

The protein belongs to the TRAFAC class translation factor GTPase superfamily. Classic translation factor GTPase family. EF-G/EF-2 subfamily.

The protein localises to the cytoplasm. In terms of biological role, catalyzes the GTP-dependent ribosomal translocation step during translation elongation. During this step, the ribosome changes from the pre-translocational (PRE) to the post-translocational (POST) state as the newly formed A-site-bound peptidyl-tRNA and P-site-bound deacylated tRNA move to the P and E sites, respectively. Catalyzes the coordinated movement of the two tRNA molecules, the mRNA and conformational changes in the ribosome. The protein is Elongation factor 2 of Thermococcus onnurineus (strain NA1).